The primary structure comprises 440 residues: NADH-quinone oxidoreductase subunit D (440 aa).

It belongs to the complex I 49 kDa subunit family. NDH-1 is composed of 14 different subunits. Subunits NuoB, C, D, E, F, and G constitute the peripheral sector of the complex.

The protein resides in the cell membrane. The enzyme catalyses a quinone + NADH + 5 H(+)(in) = a quinol + NAD(+) + 4 H(+)(out). In terms of biological role, NDH-1 shuttles electrons from NADH, via FMN and iron-sulfur (Fe-S) centers, to quinones in the respiratory chain. The immediate electron acceptor for the enzyme in this species is believed to be a menaquinone. Couples the redox reaction to proton translocation (for every two electrons transferred, four hydrogen ions are translocated across the cytoplasmic membrane), and thus conserves the redox energy in a proton gradient. The polypeptide is NADH-quinone oxidoreductase subunit D (Acidothermus cellulolyticus (strain ATCC 43068 / DSM 8971 / 11B)).